Here is a 676-residue protein sequence, read N- to C-terminus: UvrABC system protein B (676 aa).

Residues 26-414 form the Helicase ATP-binding domain; the sequence is EGLENGLAHQ…SDGEIAEQVV (389 aa). 39–46 provides a ligand contact to ATP; that stretch reads GVTGSGKT. Positions 92 to 115 match the Beta-hairpin motif; it reads YFDYYQPEAYVPTTDTFIEKDSSV. One can recognise a Helicase C-terminal domain in the interval 432–598; it reads QVDDLLSEIR…ALKKDVADIL (167 aa). Residues 636–671 enclose the UVR domain; it reads EKAIQKLESKMYQHAKDLEFEQAAQVRDEIDNLRKQ.

Belongs to the UvrB family. In terms of assembly, forms a heterotetramer with UvrA during the search for lesions. Interacts with UvrC in an incision complex.

It localises to the cytoplasm. Its function is as follows. The UvrABC repair system catalyzes the recognition and processing of DNA lesions. A damage recognition complex composed of 2 UvrA and 2 UvrB subunits scans DNA for abnormalities. Upon binding of the UvrA(2)B(2) complex to a putative damaged site, the DNA wraps around one UvrB monomer. DNA wrap is dependent on ATP binding by UvrB and probably causes local melting of the DNA helix, facilitating insertion of UvrB beta-hairpin between the DNA strands. Then UvrB probes one DNA strand for the presence of a lesion. If a lesion is found the UvrA subunits dissociate and the UvrB-DNA preincision complex is formed. This complex is subsequently bound by UvrC and the second UvrB is released. If no lesion is found, the DNA wraps around the other UvrB subunit that will check the other stand for damage. The sequence is that of UvrABC system protein B from Aliivibrio fischeri (strain ATCC 700601 / ES114) (Vibrio fischeri).